The chain runs to 83 residues: Cytochrome b559 subunit alpha (83 aa).

Residues 21–35 (VIHSITIPSLFIAGW) traverse the membrane as a helical segment. His-23 contributes to the heme binding site.

This sequence belongs to the PsbE/PsbF family. As to quaternary structure, heterodimer of an alpha subunit and a beta subunit. PSII is composed of 1 copy each of membrane proteins PsbA, PsbB, PsbC, PsbD, PsbE, PsbF, PsbH, PsbI, PsbJ, PsbK, PsbL, PsbM, PsbT, PsbX, PsbY, PsbZ, Psb30/Ycf12, at least 3 peripheral proteins of the oxygen-evolving complex and a large number of cofactors. It forms dimeric complexes. Heme b serves as cofactor.

The protein resides in the plastid. The protein localises to the chloroplast thylakoid membrane. Functionally, this b-type cytochrome is tightly associated with the reaction center of photosystem II (PSII). PSII is a light-driven water:plastoquinone oxidoreductase that uses light energy to abstract electrons from H(2)O, generating O(2) and a proton gradient subsequently used for ATP formation. It consists of a core antenna complex that captures photons, and an electron transfer chain that converts photonic excitation into a charge separation. This chain is Cytochrome b559 subunit alpha, found in Huperzia lucidula (Shining clubmoss).